The following is a 78-amino-acid chain: Exodeoxyribonuclease 7 small subunit (78 aa).

This sequence belongs to the XseB family. As to quaternary structure, heterooligomer composed of large and small subunits.

Its subcellular location is the cytoplasm. It catalyses the reaction Exonucleolytic cleavage in either 5'- to 3'- or 3'- to 5'-direction to yield nucleoside 5'-phosphates.. Functionally, bidirectionally degrades single-stranded DNA into large acid-insoluble oligonucleotides, which are then degraded further into small acid-soluble oligonucleotides. The sequence is that of Exodeoxyribonuclease 7 small subunit from Actinobacillus succinogenes (strain ATCC 55618 / DSM 22257 / CCUG 43843 / 130Z).